The primary structure comprises 163 residues: Mating-type protein ALPHA2 (163 aa).

The segment at residues 80 to 142 (IEKRSKRFPK…NRRRKERTLT (63 aa)) is a DNA-binding region (homeobox; TALE-type).

The protein belongs to the TALE/M-ATYP homeobox family.

It is found in the nucleus. Mating type proteins are sequence specific DNA-binding proteins that act as master switches in yeast differentiation by controlling gene expression in a cell type-specific fashion. The polypeptide is Mating-type protein ALPHA2 (MATALPHA2) (Pichia angusta (Yeast)).